Here is a 769-residue protein sequence, read N- to C-terminus: Glutathione biosynthesis bifunctional protein GshAB (769 aa).

The interval 1 to 347 is glutamate--cysteine ligase; that stretch reads MLDSFKEDPK…QLADENENNI (347 aa). The ATP-grasp domain occupies 514–768; sequence KLVLAEHDIR…IGDKILDFLF (255 aa). 541 to 599 contributes to the ATP binding site; that stretch reads SLFEDKQIVVKPKSTNYGWGISIFKNKFTLEDYQEALNIAFSYDSSVIIEEFIPGDEFR. Residues Asp-721, Glu-738, and Asn-740 each contribute to the Mg(2+) site. 3 residues coordinate Mn(2+): Asp-721, Glu-738, and Asn-740.

The protein in the N-terminal section; belongs to the glutamate--cysteine ligase type 1 family. Type 2 subfamily. Monomer. Mg(2+) serves as cofactor. Requires Mn(2+) as cofactor.

The catalysed reaction is L-cysteine + L-glutamate + ATP = gamma-L-glutamyl-L-cysteine + ADP + phosphate + H(+). It carries out the reaction gamma-L-glutamyl-L-cysteine + glycine + ATP = glutathione + ADP + phosphate + H(+). It participates in sulfur metabolism; glutathione biosynthesis; glutathione from L-cysteine and L-glutamate: step 1/2. It functions in the pathway sulfur metabolism; glutathione biosynthesis; glutathione from L-cysteine and L-glutamate: step 2/2. In terms of biological role, synthesizes glutathione from L-glutamate and L-cysteine via gamma-L-glutamyl-L-cysteine. The polypeptide is Glutathione biosynthesis bifunctional protein GshAB (Listeria monocytogenes serotype 4b (strain F2365)).